A 93-amino-acid polypeptide reads, in one-letter code: Probable Fe(2+)-trafficking protein (93 aa).

Belongs to the Fe(2+)-trafficking protein family.

Its function is as follows. Could be a mediator in iron transactions between iron acquisition and iron-requiring processes, such as synthesis and/or repair of Fe-S clusters in biosynthetic enzymes. The protein is Probable Fe(2+)-trafficking protein of Polaromonas naphthalenivorans (strain CJ2).